Here is a 229-residue protein sequence, read N- to C-terminus: PKHD-type hydroxylase OCAR_6723/OCA5_c13470 (229 aa).

The Fe2OG dioxygenase domain maps to 78-180; the sequence is HIFPPLFNRY…RVASFFWLQS (103 aa). Fe cation-binding residues include His98, Asp100, and His161. Arg171 contacts 2-oxoglutarate.

The cofactor is Fe(2+). L-ascorbate is required as a cofactor.

The chain is PKHD-type hydroxylase OCAR_6723/OCA5_c13470 from Afipia carboxidovorans (strain ATCC 49405 / DSM 1227 / KCTC 32145 / OM5) (Oligotropha carboxidovorans).